A 740-amino-acid polypeptide reads, in one-letter code: E3 ubiquitin-protein ligase TRIM9 (740 aa).

Residues 7 to 30 (CPTCKQLYANPVLLPCFHALCLGC) form an RING-type; degenerate zinc finger. Residues 64 to 73 (GNGGGAGGGA) show a composition bias toward gly residues. Positions 64 to 114 (GNGGGAGGGAAAPVTNPNGPGTRHSSHSSAASTASSNTGSESVTSDQDQSD) are disordered. Residues 74–105 (AAPVTNPNGPGTRHSSHSSAASTASSNTGSES) show a composition bias toward low complexity. Residues 195–244 (REALRCQMCETDPKVASLICEQCEIRYCDACRELTHPARGPLAKHTLVKP) form a B box-type 1; atypical zinc finger. Zn(2+) contacts are provided by Cys200, Cys203, Cys225, His230, Cys255, His258, Cys277, and His283. Residues 250 to 291 (QRESVCGEHEETLSQYCLSCKAPACGLCIGELRHQAHDVQSI) form a B box-type 2 zinc finger. A coiled-coil region spans residues 294 to 324 (TCKAQKTELSHNLQQLSEKARSTTEFIQRLK). In terms of domain architecture, COS spans 399–459 (LKETDSAAFL…ARAIDNLNFI (61 aa)). A Fibronectin type-III domain is found at 474-567 (APMTPTILPS…ELIGLQTAEV (94 aa)). A B30.2/SPRY domain is found at 549 to 736 (NSAGEGEYSE…TMHTAMDAPK (188 aa)).

Belongs to the TRIM/RBCC family. In terms of assembly, interacts (via fibronectin type-III domain) with pico. Interacts (via SPRY domain) with netrin receptor fra.

It is found in the cell projection. It localises to the axon. The protein resides in the perikaryon. The enzyme catalyses S-ubiquitinyl-[E2 ubiquitin-conjugating enzyme]-L-cysteine + [acceptor protein]-L-lysine = [E2 ubiquitin-conjugating enzyme]-L-cysteine + N(6)-ubiquitinyl-[acceptor protein]-L-lysine.. It participates in protein modification; protein ubiquitination. E3 ubiquitin-protein ligase activity. During embryonic and larval development, regulates the pattern of axonal projections of class IV nociceptive sensory neurons (C4da) downstream of netrin receptor fra. Regulates fine-scale topography of C4da axon terminals upon neuronal activity. During eye development, consolidates the attachment of R8 photoreceptor growth cones to the target medulla layer, probably downstream of fra. In Drosophila melanogaster (Fruit fly), this protein is E3 ubiquitin-protein ligase TRIM9.